The primary structure comprises 503 residues: Serine/threonine-protein kinase chk-1 (503 aa).

A Protein kinase domain is found at Tyr24–Tyr286. Residues Leu30–Val38 and Lys54 each bind ATP. Asp150 acts as the Proton acceptor in catalysis. The segment at Ser320–Pro346 is disordered. A compositionally biased stretch (polar residues) spans Glu331–Pro346. Position 344 is a phosphoserine (Ser344).

This sequence belongs to the protein kinase superfamily. CAMK Ser/Thr protein kinase family. NIM1 subfamily. As to expression, expressed in the germline.

Its subcellular location is the cytoplasm. The protein localises to the nucleus. It is found in the perinuclear region. It catalyses the reaction L-seryl-[protein] + ATP = O-phospho-L-seryl-[protein] + ADP + H(+). The enzyme catalyses L-threonyl-[protein] + ATP = O-phospho-L-threonyl-[protein] + ADP + H(+). Its function is as follows. Serine/threonine-protein kinase which is required for checkpoint-mediated cell cycle arrest and activation of DNA repair in response to the presence of DNA damage or unreplicated DNA. May also negatively regulate cell cycle progression during unperturbed cell cycles. Required for checkpoint mediated cell cycle arrest in response to DNA damage in germline cells. Delays cell-cycle reentry of the Z2 and Z3 primordial germ cells in response to transcription-induced DNA damage as they emerge from cell cycle arrest in L1 larvae. Essential for embryogenesis. The sequence is that of Serine/threonine-protein kinase chk-1 from Caenorhabditis elegans.